We begin with the raw amino-acid sequence, 470 residues long: 3-isopropylmalate dehydratase large subunit (470 aa).

Cysteine 349, cysteine 409, and cysteine 412 together coordinate [4Fe-4S] cluster.

It belongs to the aconitase/IPM isomerase family. LeuC type 1 subfamily. In terms of assembly, heterodimer of LeuC and LeuD. [4Fe-4S] cluster is required as a cofactor.

The catalysed reaction is (2R,3S)-3-isopropylmalate = (2S)-2-isopropylmalate. Its pathway is amino-acid biosynthesis; L-leucine biosynthesis; L-leucine from 3-methyl-2-oxobutanoate: step 2/4. In terms of biological role, catalyzes the isomerization between 2-isopropylmalate and 3-isopropylmalate, via the formation of 2-isopropylmaleate. In Methylobacterium radiotolerans (strain ATCC 27329 / DSM 1819 / JCM 2831 / NBRC 15690 / NCIMB 10815 / 0-1), this protein is 3-isopropylmalate dehydratase large subunit.